The chain runs to 196 residues: Probable molybdenum cofactor guanylyltransferase (196 aa).

GTP-binding positions include L7–G9, K19, D68, and D93. Position 93 (D93) interacts with Mg(2+).

This sequence belongs to the MobA family. It depends on Mg(2+) as a cofactor.

It localises to the cytoplasm. It catalyses the reaction Mo-molybdopterin + GTP + H(+) = Mo-molybdopterin guanine dinucleotide + diphosphate. Transfers a GMP moiety from GTP to Mo-molybdopterin (Mo-MPT) cofactor (Moco or molybdenum cofactor) to form Mo-molybdopterin guanine dinucleotide (Mo-MGD) cofactor. The sequence is that of Probable molybdenum cofactor guanylyltransferase from Pyrococcus furiosus (strain ATCC 43587 / DSM 3638 / JCM 8422 / Vc1).